An 86-amino-acid polypeptide reads, in one-letter code: Large ribosomal subunit protein bL31B (86 aa).

Belongs to the bacterial ribosomal protein bL31 family. Type B subfamily. As to quaternary structure, part of the 50S ribosomal subunit.

This is Large ribosomal subunit protein bL31B from Burkholderia cenocepacia (strain ATCC BAA-245 / DSM 16553 / LMG 16656 / NCTC 13227 / J2315 / CF5610) (Burkholderia cepacia (strain J2315)).